We begin with the raw amino-acid sequence, 241 residues long: Ubiquinone biosynthesis O-methyltransferase (241 aa).

Arg46, Gly66, Asp87, and Met131 together coordinate S-adenosyl-L-methionine.

The protein belongs to the methyltransferase superfamily. UbiG/COQ3 family.

The enzyme catalyses a 3-demethylubiquinol + S-adenosyl-L-methionine = a ubiquinol + S-adenosyl-L-homocysteine + H(+). The catalysed reaction is a 3-(all-trans-polyprenyl)benzene-1,2-diol + S-adenosyl-L-methionine = a 2-methoxy-6-(all-trans-polyprenyl)phenol + S-adenosyl-L-homocysteine + H(+). The protein operates within cofactor biosynthesis; ubiquinone biosynthesis. O-methyltransferase that catalyzes the 2 O-methylation steps in the ubiquinone biosynthetic pathway. The protein is Ubiquinone biosynthesis O-methyltransferase of Bordetella pertussis (strain Tohama I / ATCC BAA-589 / NCTC 13251).